The primary structure comprises 240 residues: Methylthioribulose-1-phosphate dehydratase (240 aa).

The span at 1–17 (MAQEVENNNNDHLVQSS) shows a compositional bias: polar residues. A disordered region spans residues 1–20 (MAQEVENNNNDHLVQSSDPE). C100 lines the substrate pocket. Zn(2+) is bound by residues H117 and H119. Catalysis depends on E146, which acts as the Proton donor/acceptor. Zn(2+) is bound at residue H202.

The protein belongs to the aldolase class II family. MtnB subfamily. The cofactor is Zn(2+).

It is found in the cytoplasm. It catalyses the reaction 5-(methylsulfanyl)-D-ribulose 1-phosphate = 5-methylsulfanyl-2,3-dioxopentyl phosphate + H2O. The protein operates within amino-acid biosynthesis; L-methionine biosynthesis via salvage pathway; L-methionine from S-methyl-5-thio-alpha-D-ribose 1-phosphate: step 2/6. Functionally, catalyzes the dehydration of methylthioribulose-1-phosphate (MTRu-1-P) into 2,3-diketo-5-methylthiopentyl-1-phosphate (DK-MTP-1-P). This Neosartorya fischeri (strain ATCC 1020 / DSM 3700 / CBS 544.65 / FGSC A1164 / JCM 1740 / NRRL 181 / WB 181) (Aspergillus fischerianus) protein is Methylthioribulose-1-phosphate dehydratase.